Consider the following 85-residue polypeptide: uncharacterized protein (85 aa).

The signal sequence occupies residues 1-21 (MRPLLCALAGLALLCAVGALA). A compositionally biased stretch (basic and acidic residues) spans 22–35 (DGREDRGSPGDTGE). The tract at residues 22–85 (DGREDRGSPG…EVVHLPGSTL (64 aa)) is disordered. Positions 36 to 51 (RPAGPARGPGLEPARG) are enriched in low complexity.

It localises to the secreted. This is an uncharacterized protein from Homo sapiens (Human).